The following is a 212-amino-acid chain: Thymidine kinase (212 aa).

Residues 16-23 (GPMFSGKS) and 99-102 (DEAQ) each bind ATP. Catalysis depends on glutamate 100, which acts as the Proton acceptor.

Belongs to the thymidine kinase family. As to quaternary structure, homotetramer.

The protein resides in the cytoplasm. It catalyses the reaction thymidine + ATP = dTMP + ADP + H(+). This Deinococcus radiodurans (strain ATCC 13939 / DSM 20539 / JCM 16871 / CCUG 27074 / LMG 4051 / NBRC 15346 / NCIMB 9279 / VKM B-1422 / R1) protein is Thymidine kinase.